Consider the following 254-residue polypeptide: uncharacterized protein (254 aa).

This is an uncharacterized protein from Escherichia coli (strain K12).